The chain runs to 504 residues: uncharacterized protein (504 aa).

2 disordered regions span residues 1 to 59 and 171 to 255; these read MSSS…KNEY and GVNS…NQRL. Basic and acidic residues-rich tracts occupy residues 36–50 and 199–212; these read KPID…KEIG and RAET…ESRQ. The segment covering 213–232 has biased composition (polar residues); sequence SNRGNNDNGDQRMTSKATTR.

This is an uncharacterized protein from Caenorhabditis elegans.